The sequence spans 118 residues: DNA-binding protein MmarC6_0793 (118 aa).

Residues 1–12 (MNPEEIRQRRLQ) are compositionally biased toward basic and acidic residues. Residues 1-33 (MNPEEIRQRRLQEMQAKAQEQGAQDPEAQRQMQ) form a disordered region. Positions 24–33 (QDPEAQRQMQ) are enriched in low complexity.

Belongs to the PDCD5 family.

The sequence is that of DNA-binding protein MmarC6_0793 from Methanococcus maripaludis (strain C6 / ATCC BAA-1332).